The chain runs to 130 residues: MYSTITRDIQITVLTEFVPERSDADESSFFWAYTVEIANQSDLTVQLTGRHWKITDANGKLEEVQGPGIVGEQPVLKPGETFRYTSGCPLTTPSGIMTGSYRMVTEKGDVFEAAIPVFSLDSPFSRQVLN.

Positions serine 3–glutamine 127 constitute an ApaG domain.

This chain is Protein ApaG, found in Beijerinckia indica subsp. indica (strain ATCC 9039 / DSM 1715 / NCIMB 8712).